The primary structure comprises 341 residues: Uroporphyrinogen decarboxylase (341 aa).

Residues 23 to 27 (RQAGR), aspartate 73, tyrosine 148, serine 203, and histidine 318 each bind substrate.

Belongs to the uroporphyrinogen decarboxylase family. In terms of assembly, homodimer.

The protein localises to the cytoplasm. The catalysed reaction is uroporphyrinogen III + 4 H(+) = coproporphyrinogen III + 4 CO2. It participates in porphyrin-containing compound metabolism; protoporphyrin-IX biosynthesis; coproporphyrinogen-III from 5-aminolevulinate: step 4/4. Functionally, catalyzes the decarboxylation of four acetate groups of uroporphyrinogen-III to yield coproporphyrinogen-III. The polypeptide is Uroporphyrinogen decarboxylase (Brucella anthropi (strain ATCC 49188 / DSM 6882 / CCUG 24695 / JCM 21032 / LMG 3331 / NBRC 15819 / NCTC 12168 / Alc 37) (Ochrobactrum anthropi)).